We begin with the raw amino-acid sequence, 793 residues long: Splicing factor 3A subunit 1 (793 aa).

The tract at residues 1–43 (MPAGPVQAVPPPPPVPTEPKQPTEEEASSKEDSAPSKPVVGII) is disordered. Pro residues predominate over residues 8-19 (AVPPPPPVPTEP). K20 participates in a covalent cross-link: Glycyl lysine isopeptide (Lys-Gly) (interchain with G-Cter in SUMO2). Positions 21 to 34 (QPTEEEASSKEDSA) are enriched in basic and acidic residues. The stretch at 52–94 (IVDKTASFVARNGPEFEARIRQNEINNPKFNFLNPNDPYHAYY) is one SURP motif 1 repeat. K55 bears the N6-acetyllysine mark. Residue K131 forms a Glycyl lysine isopeptide (Lys-Gly) (interchain with G-Cter in SUMO2) linkage. The SURP motif 2 repeat unit spans residues 166–208 (VVKLTAQFVARNGRQFLTQLMQKEQRNYQFDFLRPQHSLFNYF). Residues 318-428 (GESEEVEMEV…KIPASKMQEH (111 aa)) form a disordered region. Residues S320, S329, and S359 each carry the phosphoserine modification. Composition is skewed to acidic residues over residues 320–334 (SEEV…EEDD) and 354–364 (DMDEGSDDEEE). The span at 368–384 (VPPPPETPMPPPLPPTP) shows a compositional bias: pro residues. The span at 388 to 397 (IVRKDYDPKA) shows a compositional bias: basic and acidic residues. Position 413 is a phosphoserine (S413). K424 participates in a covalent cross-link: Glycyl lysine isopeptide (Lys-Gly) (interchain with G-Cter in SUMO2). Phosphoserine is present on S451. At Y456 the chain carries Phosphotyrosine. The span at 488 to 502 (IGEEEIQKPEEKVTW) shows a compositional bias: basic and acidic residues. Disordered stretches follow at residues 488–518 (IGEE…AAQA), 530–584 (HKAK…TMPP), and 665–688 (APMP…LKTE). Residue K499 forms a Glycyl lysine isopeptide (Lys-Gly) (interchain with G-Cter in SUMO2) linkage. The residue at position 508 (S508) is a Phosphoserine. Polar residues predominate over residues 509–518 (MARTQQAAQA). Residue K542 forms a Glycyl lysine isopeptide (Lys-Gly) (interchain with G-Cter in SUMO2) linkage. Residues 665-675 (APMPPVHPPPP) show a composition bias toward pro residues. A required and sufficient for nuclear import region spans residues 680–702 (PTSKKLKTEDSLMPEEEFLRRNK). K686 is covalently cross-linked (Glycyl lysine isopeptide (Lys-Gly) (interchain with G-Cter in SUMO2)). The Ubiquitin-like domain occupies 707-793 (IKVQVPNMQD…ALKERGGRKK (87 aa)). Phosphotyrosine is present on Y759.

Component of the 17S U2 SnRNP complex, a ribonucleoprotein complex that contains small nuclear RNA (snRNA) U2 and a number of specific proteins. Part of the SF3A subcomplex of the 17S U2 SnRNP complex which is composed of three subunits; SF3A3/SAP61, SF3A2/SAP62 and SF3A1/SAP114. SF3A associates with the splicing factor SF3B and a 12S RNA unit to form the mature 17S U2 small nuclear ribonucleoprotein complex (17S U2 snRNP). SF3A1 functions as a scaffold that interacts directly with both SF3A2 and SF3A3. Identified in the spliceosome 'E' complex, a precursor of the spliceosome 'A' complex. Identified in the spliceosome 'A' and 'B' complexes. Identified in the spliceosome 'C' complex. Interacts with P2RX6; resulting in a reduction of the splicing activity. Ubiquitously expressed.

It localises to the nucleus. The protein localises to the nucleus speckle. In terms of biological role, component of the 17S U2 SnRNP complex of the spliceosome, a large ribonucleoprotein complex that removes introns from transcribed pre-mRNAs. The 17S U2 SnRNP complex (1) directly participates in early spliceosome assembly and (2) mediates recognition of the intron branch site during pre-mRNA splicing by promoting the selection of the pre-mRNA branch-site adenosine, the nucleophile for the first step of splicing. Within the 17S U2 SnRNP complex, SF3A1 is part of the SF3A subcomplex that contributes to the assembly of the 17S U2 snRNP, and the subsequent assembly of the pre-spliceosome 'E' complex and the pre-catalytic spliceosome 'A' complex. Involved in pre-mRNA splicing as a component of pre-catalytic spliceosome 'B' complexes. This is Splicing factor 3A subunit 1 (SF3A1) from Homo sapiens (Human).